We begin with the raw amino-acid sequence, 117 residues long: UPF0342 protein BLi01058/BL02870 (117 aa).

Belongs to the UPF0342 family.

This is UPF0342 protein BLi01058/BL02870 from Bacillus licheniformis (strain ATCC 14580 / DSM 13 / JCM 2505 / CCUG 7422 / NBRC 12200 / NCIMB 9375 / NCTC 10341 / NRRL NRS-1264 / Gibson 46).